Consider the following 502-residue polypeptide: ATP synthase subunit alpha (502 aa).

169–176 (GDRQTGKT) provides a ligand contact to ATP.

Belongs to the ATPase alpha/beta chains family. In terms of assembly, F-type ATPases have 2 components, CF(1) - the catalytic core - and CF(0) - the membrane proton channel. CF(1) has five subunits: alpha(3), beta(3), gamma(1), delta(1), epsilon(1). CF(0) has three main subunits: a(1), b(2) and c(9-12). The alpha and beta chains form an alternating ring which encloses part of the gamma chain. CF(1) is attached to CF(0) by a central stalk formed by the gamma and epsilon chains, while a peripheral stalk is formed by the delta and b chains.

It is found in the cell inner membrane. The enzyme catalyses ATP + H2O + 4 H(+)(in) = ADP + phosphate + 5 H(+)(out). Functionally, produces ATP from ADP in the presence of a proton gradient across the membrane. The alpha chain is a regulatory subunit. This is ATP synthase subunit alpha from Oleidesulfovibrio alaskensis (strain ATCC BAA-1058 / DSM 17464 / G20) (Desulfovibrio alaskensis).